The sequence spans 197 residues: Probable GTP-binding protein EngB (197 aa).

In terms of domain architecture, EngB-type G spans Asp22–Ile194. GTP-binding positions include Gly30–Ser37, Gly57–Leu61, Asp75–Gly78, Thr142–Asp145, and Phe173–Thr175. Residues Ser37 and Thr59 each coordinate Mg(2+).

Belongs to the TRAFAC class TrmE-Era-EngA-EngB-Septin-like GTPase superfamily. EngB GTPase family. Mg(2+) is required as a cofactor.

Functionally, necessary for normal cell division and for the maintenance of normal septation. The protein is Probable GTP-binding protein EngB of Desulfosudis oleivorans (strain DSM 6200 / JCM 39069 / Hxd3) (Desulfococcus oleovorans).